Here is a 221-residue protein sequence, read N- to C-terminus: Pyridoxal phosphate homeostasis protein (221 aa).

Lysine 26 bears the N6-(pyridoxal phosphate)lysine mark.

Belongs to the pyridoxal phosphate-binding protein YggS/PROSC family.

Functionally, pyridoxal 5'-phosphate (PLP)-binding protein, which is involved in PLP homeostasis. The chain is Pyridoxal phosphate homeostasis protein from Corynebacterium glutamicum (strain ATCC 13032 / DSM 20300 / JCM 1318 / BCRC 11384 / CCUG 27702 / LMG 3730 / NBRC 12168 / NCIMB 10025 / NRRL B-2784 / 534).